The primary structure comprises 268 residues: Ribosomal RNA small subunit methyltransferase A (268 aa).

The S-adenosyl-L-methionine site is built by asparagine 12, leucine 14, glycine 38, glutamate 59, aspartate 82, and asparagine 107.

Belongs to the class I-like SAM-binding methyltransferase superfamily. rRNA adenine N(6)-methyltransferase family. RsmA subfamily.

It localises to the cytoplasm. It carries out the reaction adenosine(1518)/adenosine(1519) in 16S rRNA + 4 S-adenosyl-L-methionine = N(6)-dimethyladenosine(1518)/N(6)-dimethyladenosine(1519) in 16S rRNA + 4 S-adenosyl-L-homocysteine + 4 H(+). Its function is as follows. Specifically dimethylates two adjacent adenosines (A1518 and A1519) in the loop of a conserved hairpin near the 3'-end of 16S rRNA in the 30S particle. May play a critical role in biogenesis of 30S subunits. The polypeptide is Ribosomal RNA small subunit methyltransferase A (Aster yellows witches'-broom phytoplasma (strain AYWB)).